A 127-amino-acid polypeptide reads, in one-letter code: Small ribosomal subunit protein uS11 (127 aa).

Belongs to the universal ribosomal protein uS11 family. In terms of assembly, part of the 30S ribosomal subunit.

In terms of biological role, located on the platform of the 30S subunit. This is Small ribosomal subunit protein uS11 from Halobacterium salinarum (strain ATCC 700922 / JCM 11081 / NRC-1) (Halobacterium halobium).